Here is a 241-residue protein sequence, read N- to C-terminus: MFKRLSLYTLLLCLVPFFIWGISYQWHGNSQLTQADYWLYLLTETGSVPYALITCVLFTLLFAFLFKNPKQWILGVIVMGISVIATQAAKTGAKALFEEPRPFTVYLAEQTHSTPENFYKNDRTLRAEIAKNFYSMDAITPAWLVHHYENETGYSFPSGHTIFAATWLMLAVGFTQLLGNRSFKAKLLVVGIAVWGLLMLISRVRLGMHYPIDLLVATLLAWLINSIIFAFLKKKAIFVMK.

The helical transmembrane segment at 1-21 threads the bilayer; sequence MFKRLSLYTLLLCLVPFFIWG. Topologically, residues 22–52 are periplasmic; it reads ISYQWHGNSQLTQADYWLYLLTETGSVPYAL. A helical transmembrane segment spans residues 53–62; it reads ITCVLFTLLF. Residues 63–67 are Cytoplasmic-facing; sequence AFLFK. The helical transmembrane segment at 68–91 threads the bilayer; it reads NPKQWILGVIVMGISVIATQAAKT. At 92-158 the chain is on the periplasmic side; sequence GAKALFEEPR…ENETGYSFPS (67 aa). A phosphatase sequence motif I region spans residues 94-102; it reads KALFEEPRP. Positions 157–160 are phosphatase sequence motif II; the sequence is PSGH. The helical transmembrane segment at 159-173 threads the bilayer; sequence GHTIFAATWLMLAVG. The Proton donor; for a subset of substrates role is filled by His160. The Cytoplasmic segment spans residues 174-184; the sequence is FTQLLGNRSFK. The chain crosses the membrane as a helical span at residues 185 to 204; sequence AKLLVVGIAVWGLLMLISRV. The interval 202–213 is phosphatase sequence motif III; it reads SRVRLGMHYPID. The Periplasmic segment spans residues 205 to 210; that stretch reads RLGMHY. His209 serves as the catalytic Nucleophile. Residues 211 to 235 traverse the membrane as a helical segment; the sequence is PIDLLVATLLAWLINSIIFAFLKKK. The Cytoplasmic segment spans residues 236-241; the sequence is AIFVMK.

The protein belongs to the PA-phosphatase related phosphoesterase family.

It localises to the cell inner membrane. It is found in the cell outer membrane. The enzyme catalyses a 1,2-diacyl-sn-glycero-3-phospho-(1'-sn-glycero-3'-phosphate) + H2O = a 1,2-diacyl-sn-glycero-3-phospho-(1'-sn-glycerol) + phosphate. It catalyses the reaction a 1,2-diacyl-sn-glycerol 3-diphosphate + H2O = a 1,2-diacyl-sn-glycero-3-phosphate + phosphate + H(+). The catalysed reaction is a 1,2-diacyl-sn-glycero-3-phosphate + H2O = a 1,2-diacyl-sn-glycerol + phosphate. It carries out the reaction di-trans,octa-cis-undecaprenyl diphosphate + H2O = di-trans,octa-cis-undecaprenyl phosphate + phosphate + H(+). The protein operates within phospholipid metabolism; phosphatidylglycerol biosynthesis; phosphatidylglycerol from CDP-diacylglycerol: step 2/2. In terms of biological role, catalyzes the dephosphorylation of diacylglycerol diphosphate (DGPP) to phosphatidate (PA) and the subsequent dephosphorylation of PA to diacylglycerol (DAG). Also has undecaprenyl pyrophosphate phosphatase activity, required for the biosynthesis of the lipid carrier undecaprenyl phosphate. Can also use lysophosphatidic acid (LPA) and phosphatidylglycerophosphate as substrates. The pattern of activities varies according to subcellular location, PGP phosphatase activity is higher in the cytoplasmic membrane, whereas PA and LPA phosphatase activities are higher in the outer membrane. Activity is independent of a divalent cation ion and insensitive to inhibition by N-ethylmaleimide. The polypeptide is Phosphatidylglycerophosphatase B (pgpB) (Haemophilus influenzae (strain ATCC 51907 / DSM 11121 / KW20 / Rd)).